Consider the following 310-residue polypeptide: Calcium homeostasis modulator protein 5 (310 aa).

Helical transmembrane passes span 17 to 37 (TIGYSVMAILTIGSERIFSMV), 49 to 69 (FPYGICFLLGPAVVLLVVGFF), 101 to 121 (LIKVLYGACVAPVMWLTVALL), and 181 to 201 (QILGWSVIITAVVIALIGTCY).

Belongs to the CALHM family.

It is found in the membrane. In terms of biological role, pore-forming subunit of a voltage-gated ion channel. The sequence is that of Calcium homeostasis modulator protein 5 (calhm5.1) from Danio rerio (Zebrafish).